A 329-amino-acid polypeptide reads, in one-letter code: Helicase VP6-A (329 aa).

Disordered regions lie at residues 27–130 (INLV…TNGG) and 189–232 (DLRR…SEEP). Composition is skewed to basic and acidic residues over residues 36-58 (EGGK…KDGE), 65-83 (GQKE…DRRI), and 96-109 (SGER…RGDG). Lys110 contacts ATP. A compositionally biased stretch (gly residues) spans 110-129 (KVGGGGGDADAGVGATGTNG). Basic and acidic residues-rich tracts occupy residues 189–207 (DLRR…ERGG) and 215–232 (HGDA…SEEP).

It belongs to the reoviruses VP6 family. As to quaternary structure, homohexamer.

It is found in the virion. The enzyme catalyses ATP + H2O = ADP + phosphate + H(+). In terms of biological role, ATP dependent RNA helicase essential for RNA packaging and viral transcription. Possesses ss- and dsRNA-binding capacity. The sequence is that of Helicase VP6-A (Segment-9) from Antilocapra americana (Pronghorn).